A 196-amino-acid chain; its full sequence is Na(+)-translocating ferredoxin:NAD(+) oxidoreductase complex subunit E (196 aa).

The next 5 membrane-spanning stretches (helical) occupy residues 38 to 58 (MGMGLATMLVLIGSNVAISAL), 68 to 88 (IPAFVVVIASFVTIVGMLMKA), 92 to 112 (ALDAALGIFIPLIVVNCIILA), 127 to 147 (FADAVGMGLGFTLALTILGSI), and 169 to 189 (VLLMILPPGAFLTLGLLIGLI).

It belongs to the NqrDE/RnfAE family. As to quaternary structure, the complex is composed of six subunits: RnfA, RnfB, RnfC, RnfD, RnfE and RnfG.

Its subcellular location is the cell membrane. It carries out the reaction 2 reduced [2Fe-2S]-[ferredoxin] + Na(+)(in) + NAD(+) + H(+) = 2 oxidized [2Fe-2S]-[ferredoxin] + Na(+)(out) + NADH. Functionally, part of a membrane-bound complex that couples electron transfer with translocation of ions across the membrane. Couples electron transfer from reduced ferredoxin to NAD(+) with electrogenic movement of Na(+) out of the cell. Involved in caffeate respiration. In Acetobacterium woodii (strain ATCC 29683 / DSM 1030 / JCM 2381 / KCTC 1655 / WB1), this protein is Na(+)-translocating ferredoxin:NAD(+) oxidoreductase complex subunit E.